We begin with the raw amino-acid sequence, 306 residues long: D-alanine--D-alanine ligase B (306 aa).

Catalysis depends on residues Glu15 and Ser150. Positions Lys101–Glu303 constitute an ATP-grasp domain. Ile134–Thr189 lines the ATP pocket. Residues Asp257, Glu270, and Asn272 each contribute to the Mg(2+) site. Ser281 is an active-site residue.

This sequence belongs to the D-alanine--D-alanine ligase family. As to quaternary structure, monomer. It depends on Mg(2+) as a cofactor. Mn(2+) serves as cofactor.

It is found in the cytoplasm. It catalyses the reaction 2 D-alanine + ATP = D-alanyl-D-alanine + ADP + phosphate + H(+). Its pathway is cell wall biogenesis; peptidoglycan biosynthesis. In terms of biological role, cell wall formation. The protein is D-alanine--D-alanine ligase B (ddlB) of Escherichia coli O157:H7.